The following is a 298-amino-acid chain: Tryptophan 2,3-dioxygenase (298 aa).

Residues 51–55 (FIIQH), Tyr-113, and Arg-117 contribute to the substrate site. Residue His-240 participates in heme binding. Thr-254 serves as a coordination point for substrate.

This sequence belongs to the tryptophan 2,3-dioxygenase family. In terms of assembly, homotetramer. The cofactor is heme.

The catalysed reaction is L-tryptophan + O2 = N-formyl-L-kynurenine. It participates in amino-acid degradation; L-tryptophan degradation via kynurenine pathway; L-kynurenine from L-tryptophan: step 1/2. Functionally, heme-dependent dioxygenase that catalyzes the oxidative cleavage of the L-tryptophan (L-Trp) pyrrole ring and converts L-tryptophan to N-formyl-L-kynurenine. Catalyzes the oxidative cleavage of the indole moiety. In Xanthomonas campestris pv. campestris (strain 8004), this protein is Tryptophan 2,3-dioxygenase.